Consider the following 629-residue polypeptide: Probable potassium transport system protein Kup 3 (629 aa).

Helical transmembrane passes span 20-40 (LSLSALGIVYGDIGTSPLYTF), 61-81 (VSLIIWTLIIIASVKYIHFAL), 106-126 (PFIIAVGLMGAALIYGDGTIT), 143-163 (PSLKYYVLPIAITILITLFAI), 171-191 (IGKAFGPVMAFWFLTIGILGA), 209-229 (GLSFLFSNGATGFFILCGVFL), 253-273 (WFGLAFPSLIFNYLGQAALVL), 291-311 (FLLPLIILSTVATIIASQAII), 343-363 (IYIGVVNWLLMLATLGLTIGF), 372-392 (AYGIAVSATMLCTTLLLFIAL), 400-420 (IITSGLVAGLFMIVDASFFAA), and 425-445 (FINGGYIPITLAIIIYSMMYI).

Belongs to the HAK/KUP transporter (TC 2.A.72) family.

It is found in the cell inner membrane. It catalyses the reaction K(+)(in) + H(+)(in) = K(+)(out) + H(+)(out). Its function is as follows. Transport of potassium into the cell. Likely operates as a K(+):H(+) symporter. This is Probable potassium transport system protein Kup 3 from Legionella pneumophila subsp. pneumophila (strain Philadelphia 1 / ATCC 33152 / DSM 7513).